The chain runs to 367 residues: MLYLLFAPLADDFQLANLFRYITFRTGGALMTAMLIAFVFGKPMIGWLRRKQGKGQPIRAEGIERHVVEKAGTPTMGGFLILLGVMVGTLLWADLTNAYVWIVIFVTAGFGVIGFIDDYLKVTKQTTAGFGGRFKLVGEFAIALIAVVWATHTARSLGVEPGIETSIAVPFFKDLMINIGPLFFVFGCVVIVGSGNAVNMTDGLDGLAIVPVMIAAATFGVIAYVVGRVDFAEYLQVHYTAGAGEILIFCGALIGAGIGFLWWNAPPAMVFMGDTGSLSLGGALGTIAVAIKHELVLAIVGGLFVLELVSVMVQVASFKLFGKRVFRMAPIHHHFEKKGWAEPTIVIRFWIIAVILALIGLATLKLR.

The next 10 helical transmembrane spans lie at 28-48 (GALM…IGWL), 75-95 (TMGG…WADL), 96-116 (TNAY…IGFI), 134-154 (FKLV…THTA), 175-195 (LMIN…VGSG), 206-226 (GLAI…AYVV), 243-263 (AGEI…FLWW), 271-291 (FMGD…AVAI), 295-315 (LVLA…MVQV), and 344-364 (TIVI…LATL).

It belongs to the glycosyltransferase 4 family. MraY subfamily. The cofactor is Mg(2+).

It localises to the cell inner membrane. The enzyme catalyses UDP-N-acetyl-alpha-D-muramoyl-L-alanyl-gamma-D-glutamyl-meso-2,6-diaminopimeloyl-D-alanyl-D-alanine + di-trans,octa-cis-undecaprenyl phosphate = di-trans,octa-cis-undecaprenyl diphospho-N-acetyl-alpha-D-muramoyl-L-alanyl-D-glutamyl-meso-2,6-diaminopimeloyl-D-alanyl-D-alanine + UMP. Its pathway is cell wall biogenesis; peptidoglycan biosynthesis. In terms of biological role, catalyzes the initial step of the lipid cycle reactions in the biosynthesis of the cell wall peptidoglycan: transfers peptidoglycan precursor phospho-MurNAc-pentapeptide from UDP-MurNAc-pentapeptide onto the lipid carrier undecaprenyl phosphate, yielding undecaprenyl-pyrophosphoryl-MurNAc-pentapeptide, known as lipid I. This Maricaulis maris (strain MCS10) (Caulobacter maris) protein is Phospho-N-acetylmuramoyl-pentapeptide-transferase.